Here is a 128-residue protein sequence, read N- to C-terminus: Fluoride-specific ion channel FluC (128 aa).

Helical transmembrane passes span 10–30 (FLAV…AGLW), 40–60 (TLLV…VLLA), 71–91 (AAVT…AETV), and 102–122 (ALGY…LGLA). Na(+) contacts are provided by G78 and T81.

This sequence belongs to the fluoride channel Fluc/FEX (TC 1.A.43) family.

Its subcellular location is the cell inner membrane. The enzyme catalyses fluoride(in) = fluoride(out). Its activity is regulated as follows. Na(+) is not transported, but it plays an essential structural role and its presence is essential for fluoride channel function. Its function is as follows. Fluoride-specific ion channel. Important for reducing fluoride concentration in the cell, thus reducing its toxicity. The chain is Fluoride-specific ion channel FluC from Bordetella petrii (strain ATCC BAA-461 / DSM 12804 / CCUG 43448).